The following is a 143-amino-acid chain: MFLGEYEHTIDDKGRLAIPARFRDALNEGVVITRGFDKCLMGFPRSVWEELARQVSSLPIGSEETRQLQRMLFSGAADMTLDRQGRILIPQNLREFAELGDQAIIAGLNRHFEIWAPRRWQNVLSAMDANASLFAQKLAELRF.

2 consecutive SpoVT-AbrB domains span residues 5–47 (EYEH…PRSV) and 76–119 (AADM…APRR).

Belongs to the MraZ family. In terms of assembly, forms oligomers.

Its subcellular location is the cytoplasm. It is found in the nucleoid. The polypeptide is Transcriptional regulator MraZ (Roseiflexus sp. (strain RS-1)).